A 641-amino-acid chain; its full sequence is UvrABC system protein C (641 aa).

In terms of domain architecture, GIY-YIG spans 16-95 (ESPGVYRFWD…IKQYEPRFNI (80 aa)). Residues 208 to 243 (TEYLRRLEKDMRAAAAAEDFERAARLRDDAAALRLA) form the UVR domain.

It belongs to the UvrC family. In terms of assembly, interacts with UvrB in an incision complex.

The protein resides in the cytoplasm. In terms of biological role, the UvrABC repair system catalyzes the recognition and processing of DNA lesions. UvrC both incises the 5' and 3' sides of the lesion. The N-terminal half is responsible for the 3' incision and the C-terminal half is responsible for the 5' incision. This chain is UvrABC system protein C, found in Acidothermus cellulolyticus (strain ATCC 43068 / DSM 8971 / 11B).